We begin with the raw amino-acid sequence, 207 residues long: Large ribosomal subunit protein uL4 (207 aa).

Positions 52–76 (KNTSLVSGGGKKPWKQKGTGRARQG) are disordered.

This sequence belongs to the universal ribosomal protein uL4 family. As to quaternary structure, part of the 50S ribosomal subunit.

Its function is as follows. One of the primary rRNA binding proteins, this protein initially binds near the 5'-end of the 23S rRNA. It is important during the early stages of 50S assembly. It makes multiple contacts with different domains of the 23S rRNA in the assembled 50S subunit and ribosome. Forms part of the polypeptide exit tunnel. The chain is Large ribosomal subunit protein uL4 from Myxococcus xanthus (strain DK1622).